The following is a 526-amino-acid chain: ATP synthase subunit alpha (526 aa).

171 to 178 (GDRQTGKT) serves as a coordination point for ATP.

This sequence belongs to the ATPase alpha/beta chains family. As to quaternary structure, F-type ATPases have 2 components, CF(1) - the catalytic core - and CF(0) - the membrane proton channel. CF(1) has five subunits: alpha(3), beta(3), gamma(1), delta(1), epsilon(1). CF(0) has four main subunits: a, b, b' and c.

Its subcellular location is the cell inner membrane. It catalyses the reaction ATP + H2O + 4 H(+)(in) = ADP + phosphate + 5 H(+)(out). Produces ATP from ADP in the presence of a proton gradient across the membrane. The alpha chain is a regulatory subunit. The protein is ATP synthase subunit alpha of Chlorobium phaeobacteroides (strain BS1).